We begin with the raw amino-acid sequence, 115 residues long: Large ribosomal subunit protein bL20 (115 aa).

It belongs to the bacterial ribosomal protein bL20 family.

In terms of biological role, binds directly to 23S ribosomal RNA and is necessary for the in vitro assembly process of the 50S ribosomal subunit. It is not involved in the protein synthesizing functions of that subunit. This is Large ribosomal subunit protein bL20 from Borrelia garinii subsp. bavariensis (strain ATCC BAA-2496 / DSM 23469 / PBi) (Borreliella bavariensis).